The sequence spans 88 residues: Beta-insect excitatory toxin LqhIT1a (88 aa).

Positions 1 to 18 (MKFFLLFLVVLPIMGVLG) are cleaved as a signal peptide. One can recognise an LCN-type CS-alpha/beta domain in the interval 20–83 (KNGYAVDSKG…ISGTTKKYCD (64 aa)). Intrachain disulfides connect Cys-34–Cys-55, Cys-40–Cys-60, Cys-44–Cys-62, and Cys-56–Cys-82.

The protein belongs to the long (4 C-C) scorpion toxin superfamily. Sodium channel inhibitor family. Beta subfamily. In terms of tissue distribution, expressed by the venom gland.

It localises to the secreted. Excitatory insect toxins induce a spastic paralysis. They bind voltage-independently at site-4 of sodium channels (Nav) and shift the voltage of activation toward more negative potentials thereby affecting sodium channel activation and promoting spontaneous and repetitive firing. This Leiurus hebraeus (Hebrew deathstalker scorpion) protein is Beta-insect excitatory toxin LqhIT1a.